A 229-amino-acid chain; its full sequence is Translin (229 aa).

The DNA/RNA binding stretch occupies residues 86–90 (RFHEH). Residues 177-198 (LDSGFRLLNLKNDSLRKRYDGL) are leucine-zipper.

Belongs to the translin family. In terms of assembly, ring-shaped heterooctamer of six TSN and two TSNAX subunits, DNA/RNA binding occurs inside the ring.

It localises to the cytoplasm. Its subcellular location is the nucleus. Functionally, exhibits both single-stranded and double-stranded endoribonuclease activity. May act as an activator of RNA-induced silencing complex (RISC) by facilitating endonucleolytic cleavage of the siRNA passenger strand. DNA-binding protein that specifically recognizes consensus sequences at the breakpoint junctions in chromosomal translocations, mostly involving immunoglobulin (Ig)/T-cell receptor gene segments. Seems to recognize single-stranded DNA ends generated by staggered breaks occurring at recombination hot spots. This Gallus gallus (Chicken) protein is Translin (TSN).